We begin with the raw amino-acid sequence, 483 residues long: UDP-N-acetylmuramoyl-L-alanyl-D-glutamate--2,6-diaminopimelate ligase (483 aa).

Serine 30 is a UDP-N-acetyl-alpha-D-muramoyl-L-alanyl-D-glutamate binding site. 109–115 serves as a coordination point for ATP; the sequence is GTNGKTT. UDP-N-acetyl-alpha-D-muramoyl-L-alanyl-D-glutamate contacts are provided by residues 151–152, serine 178, and arginine 186; that span reads TT. Lysine 218 bears the N6-carboxylysine mark. Residues arginine 380, 403–406, glycine 453, and glutamate 457 each bind meso-2,6-diaminopimelate; that span reads DNPR. Residues 403 to 406 carry the Meso-diaminopimelate recognition motif motif; the sequence is DNPR.

Belongs to the MurCDEF family. MurE subfamily. Requires Mg(2+) as cofactor. Post-translationally, carboxylation is probably crucial for Mg(2+) binding and, consequently, for the gamma-phosphate positioning of ATP.

The protein localises to the cytoplasm. The enzyme catalyses UDP-N-acetyl-alpha-D-muramoyl-L-alanyl-D-glutamate + meso-2,6-diaminopimelate + ATP = UDP-N-acetyl-alpha-D-muramoyl-L-alanyl-gamma-D-glutamyl-meso-2,6-diaminopimelate + ADP + phosphate + H(+). Its pathway is cell wall biogenesis; peptidoglycan biosynthesis. In terms of biological role, catalyzes the addition of meso-diaminopimelic acid to the nucleotide precursor UDP-N-acetylmuramoyl-L-alanyl-D-glutamate (UMAG) in the biosynthesis of bacterial cell-wall peptidoglycan. This is UDP-N-acetylmuramoyl-L-alanyl-D-glutamate--2,6-diaminopimelate ligase from Chlamydia abortus (strain DSM 27085 / S26/3) (Chlamydophila abortus).